The chain runs to 121 residues: Aspartate 1-decarboxylase (121 aa).

Ser-25 functions as the Schiff-base intermediate with substrate; via pyruvic acid in the catalytic mechanism. Residue Ser-25 is modified to Pyruvic acid (Ser). Thr-57 contributes to the substrate binding site. The active-site Proton donor is Tyr-58. Gly-73 to Ala-75 is a substrate binding site.

Belongs to the PanD family. Heterooctamer of four alpha and four beta subunits. Pyruvate is required as a cofactor. In terms of processing, is synthesized initially as an inactive proenzyme, which is activated by self-cleavage at a specific serine bond to produce a beta-subunit with a hydroxyl group at its C-terminus and an alpha-subunit with a pyruvoyl group at its N-terminus.

Its subcellular location is the cytoplasm. The enzyme catalyses L-aspartate + H(+) = beta-alanine + CO2. It participates in cofactor biosynthesis; (R)-pantothenate biosynthesis; beta-alanine from L-aspartate: step 1/1. Catalyzes the pyruvoyl-dependent decarboxylation of aspartate to produce beta-alanine. This Sulfurimonas denitrificans (strain ATCC 33889 / DSM 1251) (Thiomicrospira denitrificans (strain ATCC 33889 / DSM 1251)) protein is Aspartate 1-decarboxylase.